A 231-amino-acid chain; its full sequence is 7-cyano-7-deazaguanine synthase (231 aa).

7–17 lines the ATP pocket; that stretch reads LSSGLDSVAAL. Positions 195, 203, 206, and 209 each coordinate Zn(2+).

It belongs to the QueC family. Zn(2+) is required as a cofactor.

It catalyses the reaction 7-carboxy-7-deazaguanine + NH4(+) + ATP = 7-cyano-7-deazaguanine + ADP + phosphate + H2O + H(+). The protein operates within purine metabolism; 7-cyano-7-deazaguanine biosynthesis. Its function is as follows. Catalyzes the ATP-dependent conversion of 7-carboxy-7-deazaguanine (CDG) to 7-cyano-7-deazaguanine (preQ(0)). The protein is 7-cyano-7-deazaguanine synthase of Methanosarcina mazei (strain ATCC BAA-159 / DSM 3647 / Goe1 / Go1 / JCM 11833 / OCM 88) (Methanosarcina frisia).